We begin with the raw amino-acid sequence, 244 residues long: Probable fimbrial assembly protein FimC, serogroup H1 (244 aa).

In Dichelobacter nodosus (Bacteroides nodosus), this protein is Probable fimbrial assembly protein FimC, serogroup H1 (fimC).